A 380-amino-acid chain; its full sequence is Cobalt-precorrin-5B C(1)-methyltransferase (380 aa).

Belongs to the CbiD family.

It carries out the reaction Co-precorrin-5B + S-adenosyl-L-methionine = Co-precorrin-6A + S-adenosyl-L-homocysteine. It functions in the pathway cofactor biosynthesis; adenosylcobalamin biosynthesis; cob(II)yrinate a,c-diamide from sirohydrochlorin (anaerobic route): step 6/10. Catalyzes the methylation of C-1 in cobalt-precorrin-5B to form cobalt-precorrin-6A. This Methanosphaera stadtmanae (strain ATCC 43021 / DSM 3091 / JCM 11832 / MCB-3) protein is Cobalt-precorrin-5B C(1)-methyltransferase.